The following is a 184-amino-acid chain: Large ribosomal subunit protein uL6 (184 aa).

This sequence belongs to the universal ribosomal protein uL6 family. Part of the 50S ribosomal subunit.

Functionally, this protein binds to the 23S rRNA, and is important in its secondary structure. It is located near the subunit interface in the base of the L7/L12 stalk, and near the tRNA binding site of the peptidyltransferase center. The sequence is that of Large ribosomal subunit protein uL6 from Desulfurococcus amylolyticus (strain DSM 18924 / JCM 16383 / VKM B-2413 / 1221n) (Desulfurococcus kamchatkensis).